A 400-amino-acid polypeptide reads, in one-letter code: Exodeoxyribonuclease 7 large subunit (400 aa).

It belongs to the XseA family. As to quaternary structure, heterooligomer composed of large and small subunits.

The protein localises to the cytoplasm. It catalyses the reaction Exonucleolytic cleavage in either 5'- to 3'- or 3'- to 5'-direction to yield nucleoside 5'-phosphates.. Functionally, bidirectionally degrades single-stranded DNA into large acid-insoluble oligonucleotides, which are then degraded further into small acid-soluble oligonucleotides. This Clostridium kluyveri (strain NBRC 12016) protein is Exodeoxyribonuclease 7 large subunit.